A 92-amino-acid chain; its full sequence is Putative protein IntG (92 aa).

This sequence belongs to the 'phage' integrase family.

The sequence is that of Putative protein IntG (intG) from Escherichia coli (strain K12).